The following is a 575-amino-acid chain: Sclareol synthase, chloroplastic (575 aa).

The N-terminal 51 residues, 1–51, are a transit peptide targeting the chloroplast; the sequence is MSLAFNVGVTPFSGQRVGSRKEKFPVQGFPVTTPNRSRLIVNCSLTTIDFM. Mg(2+)-binding residues include Asp-329, Asp-333, Asn-473, Ser-477, and Glu-481. Positions 329-333 match the DDXXD motif motif; it reads DDFFD.

Belongs to the terpene synthase family.

The protein resides in the plastid. Its subcellular location is the chloroplast. It carries out the reaction 8-hydroxycopalyl diphosphate + H2O = sclareol + diphosphate. It participates in secondary metabolite biosynthesis; terpenoid biosynthesis. In terms of biological role, involved in the biosynthesis of labdane-type diterpenoid including sclareol, a diterpene-diol that is used as fragrance and flavoring, and has anticancer effects (able to kill leukemic and colon cancer cells by apoptosis). Sclareol can also be used as synthesis precursor of ambergris substitution fragance products such as ambrox. Terpene synthase that catalyzes the conversion of 8-hydroxy-copalyl diphosphate to sclareol. The sequence is that of Sclareol synthase, chloroplastic from Salvia sclarea (Clary sage).